The sequence spans 653 residues: MEKYDDIKYLSLLAKQYPTIAAASTEIINLEAILNLPKGTEHFLADLHGEYEPFVHVLKNGSGAIKRKIQEVFENSLMDCEKRSLTTLVYYPEQKLEIVLREEKDINDWYKINLYRLIELCRHVSSKYTRSKVRKALPPDFSYIIEELLHEESDNNDKQGYYDGIINTIIEIERAQEFIVALSKLIQRLVIDRLHIIGDIFDRGPRPDIILDTLINYHSVDIQWGNHDILWMGAASGNTTCIANVLRIAARYSNLDVIEDIYGINLLPLATFALKHYKNDNCIAFVPKNTDETLYGASEIELISKMHKAITIIQFKLEYEIIKRRPEFNMDHRLLLDKINYSDGTITLNNITYELCDKSFPTININNPFELTSDEKKLVSKLQISFINSDKLQKHVLFLFNKGRLYLTYNSNLLFHGCIPLNKDKTFKSMTIHGEEYKGKKLLDKFDSLAREGYFSTRGSAEKLYGIDIMWYLWTGACSSLFGKEDMTTFERYFIKDKSTHKEKKNPYYNFRDSEEMCNMIFEEFGLDPAESRIINGHVPVKNKFGENPIKCNGKLIVIDGGFAKAYRSQTGLAGYTLTYNSYGLQLISHQPFKSIEDAFSKETDILSSTQIVEKLDRKKVGDTDIGKELKNQIKDLKLLLKAYRKGLINEVR.

Belongs to the FBPase class 3 family. Mn(2+) serves as cofactor.

It carries out the reaction beta-D-fructose 1,6-bisphosphate + H2O = beta-D-fructose 6-phosphate + phosphate. It participates in carbohydrate biosynthesis; gluconeogenesis. The protein is Fructose-1,6-bisphosphatase class 3 2 of Clostridium beijerinckii (strain ATCC 51743 / NCIMB 8052) (Clostridium acetobutylicum).